The chain runs to 772 residues: MKFYIDDLPILFPYPRIYPEQYQYMCDLKHSLDAGGIALLEMPSGTGKTISLLSLIVSYQQHYPEHRKLIYCSRTMSEIDKALAELKRLMAYRTSQLGYEEPFLGLGLTSRKNLCLHPSVRREKNGNVVDARCRSLTAGFVREQRLAGMDVPTCEFHDNLEDLEPHSLISNGVWTLDDITEYGEKTTRCPYFTVRRMLPFCNVIIYSYHYLLDPKIAERVSRELSKDCIVVFDEAHNIDNVCIESLSIDLTESSLRKASKSILSLEQKVNEVKQSDSKKLQDEYQKLVRGLQDANAANDEDQFMANPVLPEDVLKEAVPGNIRRAEHFIAFLKRFVEYLKTRMKVLHVIAETPTSFLQHVKDITFIDKKPLRFCAERLTSLVRALQISLVEDFHSLQQVVAFATLVATYERGFILILEPFETENATVPNPILRFSCLDASIAIKPVFERFRSVIITSGTLSPLDMYPKMLQFNTVMQESYGMSLARNCFLPMVVTRGSDQVAISSKFEARNDPSVVRNYGNILVEFSKITPDGLVAFFPSYLYLESIVSSWQSMGILDEVWKYKLILVETPDPHETTLALETYRAACSNGRGAVLLSVARGKVSEGVDFDHHYGRAVIMFGIPYQYTESRVLKARLEFLRDTYQIREADFLTFDAMRHAAQCLGRVLRGKDDHGIMVLADKRYGRSDKRTKLPKWIQQYITEGATNLSTDMSLALAKKFLRTMAQPFTASDQEGISWWSLDDLLIHQKKALKSAAIEQSKHEDEMDIDVVET.

The Helicase ATP-binding domain maps to 7 to 283 (DLPILFPYPR…QSDSKKLQDE (277 aa)). Residue 42 to 49 (MPSGTGKT) participates in ATP binding. Cys115, Cys133, Cys154, and Cys189 together coordinate [4Fe-4S] cluster. Positions 233–236 (DEAH) match the DEAH box motif.

The protein belongs to the helicase family. RAD3/XPD subfamily. Component of the 7-subunit TFIIH core complex composed of XPB/ptr8, XPD/rad15, ssl1, tfb1, tfb2, tfb4 and tfb5, which is active in NER. The core complex associates with the 3-subunit CTD-kinase module TFIIK composed of mcs2/cyclin H, mcs6/cdk7 and pmh1/tfb3 to form the 10-subunit holoenzyme (holo-TFIIH) active in transcription. [4Fe-4S] cluster is required as a cofactor.

It localises to the nucleus. It carries out the reaction Couples ATP hydrolysis with the unwinding of duplex DNA at the replication fork by translocating in the 5'-3' direction. This creates two antiparallel DNA single strands (ssDNA). The leading ssDNA polymer is the template for DNA polymerase III holoenzyme which synthesizes a continuous strand.. The catalysed reaction is ATP + H2O = ADP + phosphate + H(+). ATP-dependent 5'-3' DNA helicase, component of the general transcription and DNA repair factor IIH (TFIIH) core complex, which is involved in general and transcription-coupled nucleotide excision repair (NER) of damaged DNA and, when complexed to TFIIK, in RNA transcription by RNA polymerase II. In NER, TFIIH acts by opening DNA around the lesion to allow the excision of the damaged oligonucleotide and its replacement by a new DNA fragment. The ATP-dependent helicase activity of XPD/rad15 is required for DNA opening. In transcription, TFIIH has an essential role in transcription initiation. When the pre-initiation complex (PIC) has been established, TFIIH is required for promoter opening and promoter escape. Phosphorylation of the C-terminal tail (CTD) of the largest subunit of RNA polymerase II by the kinase module TFIIK controls the initiation of transcription. XPD/rad15 acts by forming a bridge between TFIIK and the core-TFIIH complex. Involved in the maintenance of the fidelity of DNA replication. In Schizosaccharomyces pombe (strain 972 / ATCC 24843) (Fission yeast), this protein is General transcription and DNA repair factor IIH helicase subunit XPD.